The sequence spans 178 residues: Large ribosomal subunit protein uL10 (178 aa).

Belongs to the universal ribosomal protein uL10 family. Part of the ribosomal stalk of the 50S ribosomal subunit. The N-terminus interacts with L11 and the large rRNA to form the base of the stalk. The C-terminus forms an elongated spine to which L12 dimers bind in a sequential fashion forming a multimeric L10(L12)X complex.

Its function is as follows. Forms part of the ribosomal stalk, playing a central role in the interaction of the ribosome with GTP-bound translation factors. The chain is Large ribosomal subunit protein uL10 from Salinibacter ruber (strain DSM 13855 / M31).